The following is a 235-amino-acid chain: Voltage-gated hydrogen channel 1 (235 aa).

The Cytoplasmic segment spans residues 1–65; the sequence is MSRYLKHFTA…SLRKLYSTER (65 aa). Residues 66–86 traverse the membrane as a helical segment; that stretch reads FQIVVVCLVVLDAIFVLCELL. Over 87 to 103 the chain is Extracellular; it reads IDLSIIEADHHRIAPQV. Residues 104-126 traverse the membrane as a helical segment; the sequence is FHYLSLALLTFFMVELAGKIFAY. At 127–134 the chain is on the cytoplasmic side; it reads RLEFLHHK. A helical membrane pass occupies residues 135–155; the sequence is FEVFDGIVVVVSFILDIIYIS. The Extracellular portion of the chain corresponds to 156-162; the sequence is KEDAFDA. Residues 163–183 form a helical membrane-spanning segment; it reads MGLLILLRLWRVARIINGILV. The Cytoplasmic segment spans residues 184 to 235; sequence SVQNRANHRVEKLKEINESLVHQVNELKEQNTKMDQENVRLRALLKDHSIDF. Positions 187-231 form a coiled coil; sequence NRANHRVEKLKEINESLVHQVNELKEQNTKMDQENVRLRALLKDH.

The protein belongs to the hydrogen channel family. In terms of assembly, homodimer.

It localises to the membrane. The protein resides in the cell membrane. Functionally, mediates the voltage-dependent proton permeability of excitable membranes. Forms a proton-selective channel through which protons may pass in accordance with their electrochemical gradient. The chain is Voltage-gated hydrogen channel 1 (hvcn1) from Danio rerio (Zebrafish).